The following is a 286-amino-acid chain: ATP synthase gamma chain (286 aa).

It belongs to the ATPase gamma chain family. In terms of assembly, F-type ATPases have 2 components, CF(1) - the catalytic core - and CF(0) - the membrane proton channel. CF(1) has five subunits: alpha(3), beta(3), gamma(1), delta(1), epsilon(1). CF(0) has three main subunits: a, b and c.

The protein localises to the cell membrane. Produces ATP from ADP in the presence of a proton gradient across the membrane. The gamma chain is believed to be important in regulating ATPase activity and the flow of protons through the CF(0) complex. The chain is ATP synthase gamma chain from Bacillus cereus (strain G9842).